The following is a 317-amino-acid chain: Anamorsin homolog 2 (317 aa).

Positions 1–162 (MAKKVGVLLF…KPSWDSASVF (162 aa)) are N-terminal SAM-like domain. Residues 163-229 (QLRKGSSQKG…EDDLLTEEDL (67 aa)) are linker. Positions 240, 247, 250, and 252 each coordinate [2Fe-2S] cluster. The tract at residues 240–252 (CAPTKKACKNCTC) is fe-S binding site A. Residues C278, C281, C289, and C292 each coordinate [4Fe-4S] cluster. 2 short sequence motifs (cx2C motif) span residues 278–281 (CGSC) and 289–292 (CAGC). Positions 278-292 (CGSCGLGDAFRCAGC) are fe-S binding site B.

It belongs to the anamorsin family. As to quaternary structure, monomer. The cofactor is [2Fe-2S] cluster. [4Fe-4S] cluster is required as a cofactor.

The protein localises to the cytoplasm. It is found in the mitochondrion intermembrane space. Its function is as follows. Component of the cytosolic iron-sulfur (Fe-S) protein assembly (CIA) machinery. Required for the maturation of extramitochondrial Fe-S proteins. Part of an electron transfer chain functioning in an early step of cytosolic Fe-S biogenesis, facilitating the de novo assembly of a [4Fe-4S] cluster on the cytosolic Fe-S scaffold complex. Electrons are transferred from NADPH via a FAD- and FMN-containing diflavin oxidoreductase. Together with the diflavin oxidoreductase, also required for the assembly of the diferric tyrosyl radical cofactor of ribonucleotide reductase (RNR), probably by providing electrons for reduction during radical cofactor maturation in the catalytic small subunit. This Physcomitrium patens (Spreading-leaved earth moss) protein is Anamorsin homolog 2.